We begin with the raw amino-acid sequence, 217 residues long: Neurotrophic factor BDNF precursor form (217 aa).

Residues 1–108 (PMKEVSIRGQ…AANMSMRVRR (108 aa)) constitute a propeptide that is removed on maturation. The N-linked (GlcNAc...) asparagine glycan is linked to Asn101. Disulfide bonds link Cys121–Cys188 and Cys166–Cys217.

This sequence belongs to the NGF-beta family.

The protein resides in the secreted. Functionally, promotes the survival of neuronal populations that are all located either in the central nervous system or directly connected to it. The sequence is that of Neurotrophic factor BDNF precursor form (BDNF) from Acrantophis dumerili (Dumeril's ground boa).